We begin with the raw amino-acid sequence, 286 residues long: 4-diphosphocytidyl-2-C-methyl-D-erythritol kinase (286 aa).

The active site involves Lys-11. An ATP-binding site is contributed by 94–104 (PMGGGIGGGSS). Asp-136 is a catalytic residue.

The protein belongs to the GHMP kinase family. IspE subfamily.

It carries out the reaction 4-CDP-2-C-methyl-D-erythritol + ATP = 4-CDP-2-C-methyl-D-erythritol 2-phosphate + ADP + H(+). It functions in the pathway isoprenoid biosynthesis; isopentenyl diphosphate biosynthesis via DXP pathway; isopentenyl diphosphate from 1-deoxy-D-xylulose 5-phosphate: step 3/6. Functionally, catalyzes the phosphorylation of the position 2 hydroxy group of 4-diphosphocytidyl-2C-methyl-D-erythritol. The polypeptide is 4-diphosphocytidyl-2-C-methyl-D-erythritol kinase (Pseudomonas putida (strain ATCC 47054 / DSM 6125 / CFBP 8728 / NCIMB 11950 / KT2440)).